Reading from the N-terminus, the 331-residue chain is Type 2 lactosamine alpha-2,3-sialyltransferase (331 aa).

At 1-4 the chain is on the cytoplasmic side; it reads MRGY. A helical; Signal-anchor for type II membrane protein membrane pass occupies residues 5–25; sequence LVAIFLSAVFLYYVLHCILWG. Over 26–331 the chain is Lumenal; sequence TNVYWAAPVE…KNLVINLTQD (306 aa). N-linked (GlcNAc...) asparagine glycosylation is found at Asn129, Asn181, Asn282, Asn295, Asn308, and Asn327.

It belongs to the glycosyltransferase 29 family.

The protein localises to the golgi apparatus membrane. The catalysed reaction is a neolactoside nLc4Cer(d18:1(4E)) + CMP-N-acetyl-beta-neuraminate = a neolactoside IV(3)-alpha-NeuAc-nLc4Cer(d18:1(4E)) + CMP + H(+). The enzyme catalyses a beta-D-galactosyl-(1-&gt;4)-N-acetyl-beta-D-glucosaminyl derivative + CMP-N-acetyl-beta-neuraminate = an N-acetyl-alpha-neuraminyl-(2-&gt;3)-beta-D-galactosyl-(1-&gt;4)-N-acetyl-beta-D-glucosaminyl derivative + CMP + H(+). It catalyses the reaction a neolactoside nLc6Cer(d18:1(4E)) + CMP-N-acetyl-beta-neuraminate = a neolactoside VI(3)-alpha-NeuNAc-nLc6Cer(d18:1(4E)) + CMP + H(+). In terms of biological role, transfers the sialyl residue from CMP-N-acetyl-beta-neuraminate to the terminal galactose residue on sugar chains of glycoproteins and glycolipids. It's alpha-2,3-sialyltransferase activity is specific toward type II glycan chains (Galbeta1-4GlcNAc) on glycoproteins and glycolipids such as neolactosides nLc4Cer and nLc6Cer, whose sialyl-products serve as precursors for the Lewis X antigen. Critically involved in the synthesis of functional selectin ligands needed for neutrophil recruitment during inflammation and lymphocyte homing to the lymph nodes. The polypeptide is Type 2 lactosamine alpha-2,3-sialyltransferase (ST3GAL6) (Pongo abelii (Sumatran orangutan)).